The primary structure comprises 186 residues: Mitoferrin-2B (186 aa).

The Solcar repeat unit spans residues 75–163 (SNVTAHMLAG…FACYEKLKKT (89 aa)). Helical transmembrane passes span 77-96 (VTAHMLAGAVAGVMEHCLMY), 137-157 (RGLNVTATGAGPAHALYFACY), and 172-185 (GNCHVANGIDNSCP).

Belongs to the mitochondrial carrier (TC 2.A.29) family.

Its subcellular location is the mitochondrion inner membrane. It catalyses the reaction Fe(2+)(in) = Fe(2+)(out). Its function is as follows. Mitochondrial iron transporter that mediates iron uptake. Probably required for heme synthesis of hemoproteins and Fe-S cluster assembly in non-erythroid cells. The sequence is that of Mitoferrin-2B (slc25a28-b) from Xenopus laevis (African clawed frog).